The following is a 305-amino-acid chain: 2-methoxy-6-polyprenyl-1,4-benzoquinol methylase, mitochondrial (305 aa).

The N-terminal 34 residues, 1 to 34 (MSRLRAPVAKFLADGLKGIRSTALAGSRLSNCRY), are a transit peptide targeting the mitochondrion. S-adenosyl-L-methionine contacts are provided by residues Thr117, Asp143, and 173-174 (NA).

The protein belongs to the class I-like SAM-binding methyltransferase superfamily. MenG/UbiE family. As to quaternary structure, component of a multi-subunit COQ enzyme complex, composed of at least COQ3, COQ4, COQ5, COQ6, COQ7 and COQ9.

It localises to the mitochondrion inner membrane. It carries out the reaction 2-methoxy-6-(all-trans-decaprenyl)benzene-1,4-diol + S-adenosyl-L-methionine = 5-methoxy-2-methyl-3-(all-trans-decaprenyl)benzene-1,4-diol + S-adenosyl-L-homocysteine + H(+). It participates in cofactor biosynthesis; ubiquinone biosynthesis. Methyltransferase required for the conversion of 2-decaprenyl-6-methoxy-1,4-benzoquinol (DDMQH2) to 2-decaprenyl-3-methyl-6-methoxy-1,4-benzoquinol (DMQH2). This chain is 2-methoxy-6-polyprenyl-1,4-benzoquinol methylase, mitochondrial, found in Schizosaccharomyces pombe (strain 972 / ATCC 24843) (Fission yeast).